The chain runs to 103 residues: Small ribosomal subunit protein uS10 (103 aa).

This sequence belongs to the universal ribosomal protein uS10 family. As to quaternary structure, part of the 30S ribosomal subunit.

Its function is as follows. Involved in the binding of tRNA to the ribosomes. In Idiomarina loihiensis (strain ATCC BAA-735 / DSM 15497 / L2-TR), this protein is Small ribosomal subunit protein uS10.